We begin with the raw amino-acid sequence, 692 residues long: Formate hydrogenlyase transcriptional activator FhlA (692 aa).

The 143-residue stretch at 202-344 (DMDELVSEVA…QIAERVAIAV (143 aa)) folds into the GAF domain. The Sigma-54 factor interaction domain occupies 381–610 (IIGRSEAMYS…LENVIERAVL (230 aa)). Residues 409–416 (GETGTGKE) and 472–481 (ADKSSLFLDE) contribute to the ATP site. Residues 663–682 (PKGAAQRLGLKRTTLLSRMK) constitute a DNA-binding region (H-T-H motif).

In terms of biological role, required for induction of expression of the formate dehydrogenase H and hydrogenase-3 structural genes. Also activates expression of hyf operon (encodes the silent hydrogenase-4 gene cluster). This Escherichia coli (strain K12) protein is Formate hydrogenlyase transcriptional activator FhlA (fhlA).